The primary structure comprises 422 residues: UDP-N-acetylglucosamine 1-carboxyvinyltransferase (422 aa).

22 to 23 (KN) is a binding site for phosphoenolpyruvate. Residue Arg92 participates in UDP-N-acetyl-alpha-D-glucosamine binding. Residue Cys116 is the Proton donor of the active site. 2-(S-cysteinyl)pyruvic acid O-phosphothioketal is present on Cys116. Residues 121-125 (RPVDQ), Asp307, and Ile329 contribute to the UDP-N-acetyl-alpha-D-glucosamine site.

This sequence belongs to the EPSP synthase family. MurA subfamily.

Its subcellular location is the cytoplasm. The enzyme catalyses phosphoenolpyruvate + UDP-N-acetyl-alpha-D-glucosamine = UDP-N-acetyl-3-O-(1-carboxyvinyl)-alpha-D-glucosamine + phosphate. It participates in cell wall biogenesis; peptidoglycan biosynthesis. Cell wall formation. Adds enolpyruvyl to UDP-N-acetylglucosamine. This is UDP-N-acetylglucosamine 1-carboxyvinyltransferase from Psychrobacter arcticus (strain DSM 17307 / VKM B-2377 / 273-4).